The following is a 1531-amino-acid chain: Nuclear factor of activated T-cells 5 (1531 aa).

2 disordered regions span residues 34–89 (ELQL…TSSS) and 114–141 (VSNRGVSEKQLTSNTVQQHPSTPKRHTV). Polar residues predominate over residues 41 to 51 (RETSVASMSQT). Positions 63-89 (VVAADASSAPSSSSMGGACSSFTTSSS) are enriched in low complexity. At Ser-120 the chain carries Phosphoserine. An N6-acetyllysine modification is found at Lys-122. Residues 122–134 (KQLTSNTVQQHPS) are compositionally biased toward polar residues. At Ser-134 the chain carries Phosphoserine. Thr-135 is subject to Phosphothreonine; by CDK5. Residue Ser-155 is modified to Phosphoserine. Disordered regions lie at residues 175 to 220 (WMED…CEES) and 241 to 265 (TTDNKGNSKAGNGTLENQKGTGVKK). Low complexity predominate over residues 179 to 192 (SPSNFSNMSTSSYN). Positions 200 to 212 (KSRKRNPKQRPGV) are enriched in basic residues. Residues 241-260 (TTDNKGNSKAGNGTLENQKG) are compositionally biased toward polar residues. Residues 264–443 (KKSPMLCGQY…SPILCTQPAG (180 aa)) form the RHD domain. The DNA-binding element occupies 293–300 (RARYLTEG). Lys-556 is covalently cross-linked (Glycyl lysine isopeptide (Lys-Gly) (interchain with G-Cter in SUMO1); alternate). A Glycyl lysine isopeptide (Lys-Gly) (interchain with G-Cter in SUMO2); alternate cross-link involves residue Lys-556. Phosphoserine is present on Ser-561. Glycyl lysine isopeptide (Lys-Gly) (interchain with G-Cter in SUMO2) cross-links involve residues Lys-573 and Lys-603. Disordered stretches follow at residues 640–666 (NIAGNGSFSSPSSSHLPSENEKQQQIQ), 841–891 (VSPG…QVME), 958–996 (PPAVSGNETSTTTTQQVATPGTTMFQTSSSGDGEETGTQ), 1211–1304 (PQVA…QEQQ), 1316–1371 (APMN…QEQQ), and 1473–1502 (ISQPGQPQNEGQPPVTTLLSQQMPENSPLA). Low complexity predominate over residues 646-656 (SFSSPSSSHLP). Polar residues-rich tracts occupy residues 841–852 (VSPGMFSSTEPT) and 869–878 (HPQSENTLSN). Low complexity-rich tracts occupy residues 879 to 888 (QQQQQQQQQQ) and 960 to 980 (AVSGNETSTTTTQQVATPGTT). Composition is skewed to polar residues over residues 981–996 (MFQTSSSGDGEETGTQ) and 1224–1247 (PQSQQGTMFQSQHSIVAMQSNSPS). The span at 1248–1266 (QEQQQQQQQQQQQQQQQQQ) shows a compositional bias: low complexity. 2 stretches are compositionally biased toward polar residues: residues 1267–1278 (SILFSNQNTMAT) and 1291–1304 (FNPNQNPMANQEQQ). Positions 1320–1330 (QEQQPMQFQSQ) are enriched in low complexity. Positions 1331 to 1371 (STVSSLQNPGPTQSESSQTPLFHSSPQIQLVQGSPSSQEQQ) are enriched in polar residues. Positions 1475 to 1486 (QPGQPQNEGQPP) are enriched in low complexity. Polar residues predominate over residues 1487 to 1502 (VTTLLSQQMPENSPLA).

As to quaternary structure, homodimer when bound to DNA, completely encircles its DNA target. Interacts with CIDEC; this interaction is direct and retains NFAT5 in the cytoplasm. Does not bind with Fos and Jun transcription factors. Interacts with DDX5 and DDX17; this interaction leads to DDX5/DDX17 recruitment to LNC2 and S100A4 promoters and NFAT5-mediated DDX5/DDX17-enhanced transactivation. Post-translationally, phosphorylated. Phosphorylated at Thr-135 by CDK5 in response to osmotic stress; this phosphorylation mediates its rapid nuclear localization. In terms of processing, poly-ADP-ribosylated by PARP1 in response to DNA damage, promoting recruitment to sites of R-loop-associated DNA damage. In terms of tissue distribution, widely expressed, with highest levels in skeletal muscle, brain, heart and peripheral blood leukocytes.

The protein resides in the nucleus. Its subcellular location is the cytoplasm. It is found in the chromosome. Functionally, transcription factor involved, among others, in the transcriptional regulation of osmoprotective and inflammatory genes. Binds the DNA consensus sequence 5'-[ACT][AG]TGGAAA[CAT]A[TA][ATC][CA][ATG][GT][GAC][CG][CT]-3'. Mediates the transcriptional response to hypertonicity. Positively regulates the transcription of LCN2 and S100A4 genes; optimal transactivation of these genes requires the presence of DDX5/DDX17. Also involved in the DNA damage response by preventing formation of R-loops; R-loops are composed of a DNA:RNA hybrid and the associated non-template single-stranded DNA. This Homo sapiens (Human) protein is Nuclear factor of activated T-cells 5.